A 506-amino-acid polypeptide reads, in one-letter code: MNTMTLTPGQLSLSQLYDVWRHPVQLRLDASAIDGINASVACVNDIVAEGRTAYGINTGFGLLAQTRIADEDLQNLQRSLVLSHAAGVGDPLDDAMVRLIMVLKINSLARGFSGIRLSVIEALIALVNAGVYPLIPAKGSVGASGDLAPLAHLSLTLLGEGKARWQGEWLPAQAALKKAGLEPVALAAKEGLALLNGTQASTAFALRGLFEAQELFASAVVCGALTTEAVLGSCRPFDARIHAARGQQGQIDVARLFRHLLTDTSAIAESHHHCHKVQDPYSLRCQPQVMGACLTQLRQTKEVLLAEANAVSDNPLVFAEAGEVISGGNFHAEPVAMAADNLALAIAEIGALSERRITLMMDKHMSQLPPFLVKNGGVNSGFMIAQVTAAALASENKALAHPHSVDSLPTSANQEDHVSMAPAAGRRLWEMAANTRGVIAVEWLAACQGIDLREGLTSSPLLEQARQTLRERVAHYTQDRFFAPDIECATTLLAQGALQRLVPDFM.

The 5-imidazolinone (Ala-Gly) cross-link spans 143 to 145 (ASG). At serine 144 the chain carries 2,3-didehydroalanine (Ser).

This sequence belongs to the PAL/histidase family. In terms of processing, contains an active site 4-methylidene-imidazol-5-one (MIO), which is formed autocatalytically by cyclization and dehydration of residues Ala-Ser-Gly.

Its subcellular location is the cytoplasm. The enzyme catalyses L-histidine = trans-urocanate + NH4(+). The protein operates within amino-acid degradation; L-histidine degradation into L-glutamate; N-formimidoyl-L-glutamate from L-histidine: step 1/3. The polypeptide is Histidine ammonia-lyase (Salmonella typhi).